The chain runs to 121 residues: Small ribosomal subunit protein uS13 (121 aa).

The interval 95–121 is disordered; sequence LPVRGQNTKNNARTRKGKAVAIAGKKK. Basic residues predominate over residues 106–121; sequence ARTRKGKAVAIAGKKK.

The protein belongs to the universal ribosomal protein uS13 family. As to quaternary structure, part of the 30S ribosomal subunit. Forms a loose heterodimer with protein S19. Forms two bridges to the 50S subunit in the 70S ribosome.

Functionally, located at the top of the head of the 30S subunit, it contacts several helices of the 16S rRNA. In the 70S ribosome it contacts the 23S rRNA (bridge B1a) and protein L5 of the 50S subunit (bridge B1b), connecting the 2 subunits; these bridges are implicated in subunit movement. Contacts the tRNAs in the A and P-sites. This is Small ribosomal subunit protein uS13 from Streptococcus thermophilus (strain CNRZ 1066).